Reading from the N-terminus, the 59-residue chain is U-scoloptoxin(23)-Er2a (59 aa).

The protein belongs to the scoloptoxin-23 family. In terms of processing, contains 1 disulfide bond. Expressed by the venom gland.

The protein resides in the secreted. In Ethmostigmus rubripes (Giant centipede), this protein is U-scoloptoxin(23)-Er2a.